A 640-amino-acid polypeptide reads, in one-letter code: Chaperone protein DnaK (640 aa).

Residue threonine 199 is modified to Phosphothreonine; by autocatalysis. The interval 603–640 (YTQQAEEPQPQKEEGKAAEEDVVDAEFEEVKEDKNKAS) is disordered. Residues 611–621 (QPQKEEGKAAE) are compositionally biased toward basic and acidic residues. The span at 622–632 (EDVVDAEFEEV) shows a compositional bias: acidic residues.

It belongs to the heat shock protein 70 family.

Functionally, acts as a chaperone. This Nitrosococcus oceani (strain ATCC 19707 / BCRC 17464 / JCM 30415 / NCIMB 11848 / C-107) protein is Chaperone protein DnaK.